The chain runs to 89 residues: Exodeoxyribonuclease 7 small subunit (89 aa).

It belongs to the XseB family. Heterooligomer composed of large and small subunits.

The protein resides in the cytoplasm. It catalyses the reaction Exonucleolytic cleavage in either 5'- to 3'- or 3'- to 5'-direction to yield nucleoside 5'-phosphates.. Bidirectionally degrades single-stranded DNA into large acid-insoluble oligonucleotides, which are then degraded further into small acid-soluble oligonucleotides. This Chlorobium phaeobacteroides (strain DSM 266 / SMG 266 / 2430) protein is Exodeoxyribonuclease 7 small subunit.